A 984-amino-acid chain; its full sequence is E3 ubiquitin-protein ligase BRE1A (984 aa).

Residues 1–34 (MSGAGNKRAAGEPGPSAPPEKKAGVEDSGTTVET) form a disordered region. A coiled-coil region spans residues 43-90 (TEELDIRTLQTKNRKLAEMLDQRQAIEDELREHIEKLERRQATDDASL). A disordered region spans residues 128 to 150 (VVPEPEPDSDSNQERKDERERGE). The segment covering 139–150 (NQERKDERERGE) has biased composition (basic and acidic residues). 2 coiled-coil regions span residues 236–378 (ADTL…VKET) and 429–907 (SLHK…TTKK). Positions 506–632 (SDLSKIRSRS…KHEDGRKKEA (127 aa)) are disordered. A compositionally biased stretch (polar residues) spans 514–526 (RSGSALLQSQSST). Composition is skewed to basic and acidic residues over residues 527 to 540 (EDTK…KQEP) and 558 to 632 (SEVK…KKEA). The segment at 931–970 (CPCCNMRKKDAVLTKCFHVFCFECVKTRYDTRQRKCPKCN) adopts an RING-type zinc-finger fold.

This sequence belongs to the BRE1 family. In terms of assembly, component of the RNF20/40 complex (also known as BRE1 complex).

The protein localises to the nucleus. It catalyses the reaction S-ubiquitinyl-[E2 ubiquitin-conjugating enzyme]-L-cysteine + [acceptor protein]-L-lysine = [E2 ubiquitin-conjugating enzyme]-L-cysteine + N(6)-ubiquitinyl-[acceptor protein]-L-lysine.. It participates in protein modification; protein ubiquitination. In terms of biological role, component of the RNF20/40 E3 ubiquitin-protein ligase complex that mediates monoubiquitination of 'Lys-120' of histone H2B (H2BK120ub1). H2BK120ub1 gives a specific tag for epigenetic transcriptional activation and is also prerequisite for histone H3 'Lys-4' and 'Lys-79' methylation (H3K4me and H3K79me, respectively). This chain is E3 ubiquitin-protein ligase BRE1A (RNF20), found in Gallus gallus (Chicken).